A 159-amino-acid polypeptide reads, in one-letter code: Phosphopantetheine adenylyltransferase (159 aa).

T10 serves as a coordination point for substrate. Residues T10–F11 and H18 each bind ATP. Residues K42, M74, and R88 each coordinate substrate. Residues G89–R91, E99, and W124–S130 each bind ATP.

Belongs to the bacterial CoaD family. Homohexamer. Mg(2+) serves as cofactor.

It is found in the cytoplasm. It catalyses the reaction (R)-4'-phosphopantetheine + ATP + H(+) = 3'-dephospho-CoA + diphosphate. It functions in the pathway cofactor biosynthesis; coenzyme A biosynthesis; CoA from (R)-pantothenate: step 4/5. Reversibly transfers an adenylyl group from ATP to 4'-phosphopantetheine, yielding dephospho-CoA (dPCoA) and pyrophosphate. The polypeptide is Phosphopantetheine adenylyltransferase (Salmonella paratyphi A (strain ATCC 9150 / SARB42)).